A 109-amino-acid polypeptide reads, in one-letter code: MSQGIEFNRLMLDMRSMQMDAMAQPKSVAPAPELGQSSFADMLGQAINKVSDTQQASSQLANAFEIGKSGVDLTDVMVASQKASVSFQALTQVRNKLVQAYQDIMQMPV.

The protein belongs to the FliE family.

The protein localises to the bacterial flagellum basal body. The protein is Flagellar hook-basal body complex protein FliE of Pseudomonas fluorescens (strain SBW25).